An 862-amino-acid polypeptide reads, in one-letter code: Phosphatidic acid phosphohydrolase 1 (862 aa).

An N-LIP region spans residues 19-104 (NPATLSGAID…VPDELLVSPV (86 aa)). 2 disordered regions span residues 104 to 183 (VMSA…SVEE) and 300 to 341 (GSTL…AGSG). Residues 105–117 (MSATSSPPQSPET) are compositionally biased toward polar residues. A phosphoserine mark is found at Ser-110 and Ser-114. A compositionally biased stretch (basic and acidic residues) spans 132 to 143 (NENKKKEKKVLE). Composition is skewed to low complexity over residues 161 to 179 (SETTGSLSPTESSTTTPPD) and 300 to 313 (GSTLNSLSSSPSGS). Ser-168 carries the post-translational modification Phosphoserine. The short motif at 398-402 (DIDGT) is the DXDXT motif element. Lys-496 is modified (N6-acetyllysine). Ser-511 carries the post-translational modification Phosphoserine. Ser-602 bears the Phosphoserine; by CDC28 mark. The interval 648-732 (SDISNDDSDN…TPNKSTMSKG (85 aa)) is disordered. The segment covering 651 to 663 (SNDDSDNIDEDTD) has biased composition (acidic residues). Composition is skewed to polar residues over residues 664-679 (VSQQSNISRNRANSVK) and 687-699 (PQRNVSGSTNNNE). The span at 710–730 (ASDLVSSHSSSGSTPNKSTMS) shows a compositional bias: low complexity. Thr-723 is modified (phosphothreonine; by CDC28). At Ser-744 the chain carries Phosphoserine; by CDC28. A phosphoserine mark is found at Ser-748, Ser-773, and Ser-774. A disordered region spans residues 757 to 780 (MDDEDSNYNRTKSRRASSAAATSI). Lys-801 bears the N6-acetyllysine mark. Residues 807–862 (DVHSLGNSDTESRREQSVNETGRNQLPHNSMDDKDLDSRVSDEFDDDEFDEDEFED) form a disordered region. A phosphoserine mark is found at Ser-810 and Ser-814. Phosphothreonine is present on Thr-816. Over residues 824–834 (VNETGRNQLPH) the composition is skewed to polar residues. A compositionally biased stretch (basic and acidic residues) spans 836–848 (SMDDKDLDSRVSD). 2 positions are modified to phosphoserine: Ser-844 and Ser-847. A compositionally biased stretch (acidic residues) spans 849-862 (EFDDDEFDEDEFED).

The protein belongs to the lipin family. Mg(2+) is required as a cofactor. In terms of processing, acetylation at Lys-496 and Lys-801 by ESA1 promotes synthesis of diacylglycerol. Phosphorylated by CDC28 at the onset of mitosis, and dephosphorylated by the NEM1-SPO7 complex. Phosphorylation regulates recruitment on promoters of lipid biosynthetic enzymes.

The protein localises to the cytoplasm. The protein resides in the nucleus membrane. It localises to the endoplasmic reticulum membrane. It carries out the reaction a 1,2-diacyl-sn-glycero-3-phosphate + H2O = a 1,2-diacyl-sn-glycerol + phosphate. Its activity is regulated as follows. Phenylglyoxal and propranolol inhibit activity in dose-dependent manners with IC(50) values of 1.3 mM and 0.2 mM, respectively. Sertraline inhibits activity in a dose-dependent manner with an IC(50) value of 85 uM; the inhibitory effects of sertraline and propranolol are additive. Its function is as follows. Mg(2+)-dependent phosphatidate (PA) phosphatase which catalyzes the dephosphorylation of PA to yield diacylglycerol. Required for de novo lipid synthesis and formation of lipid droplets. Controls transcription of phospholipid biosynthetic genes and nuclear structure by regulating the amount of membrane present at the nuclear envelope. Involved in plasmid maintenance, in respiration and in cell proliferation. The chain is Phosphatidic acid phosphohydrolase 1 (PAH1) from Saccharomyces cerevisiae (strain ATCC 204508 / S288c) (Baker's yeast).